We begin with the raw amino-acid sequence, 161 residues long: Phosphopantetheine adenylyltransferase (161 aa).

Threonine 10 contributes to the substrate binding site. ATP contacts are provided by residues 10-11 (TF) and histidine 18. Substrate contacts are provided by lysine 42, methionine 74, and arginine 88. ATP contacts are provided by residues 89-91 (GVR), glutamate 99, and 124-130 (LSFVSSS).

It belongs to the bacterial CoaD family. Homohexamer. It depends on Mg(2+) as a cofactor.

The protein resides in the cytoplasm. It catalyses the reaction (R)-4'-phosphopantetheine + ATP + H(+) = 3'-dephospho-CoA + diphosphate. It functions in the pathway cofactor biosynthesis; coenzyme A biosynthesis; CoA from (R)-pantothenate: step 4/5. Its function is as follows. Reversibly transfers an adenylyl group from ATP to 4'-phosphopantetheine, yielding dephospho-CoA (dPCoA) and pyrophosphate. The chain is Phosphopantetheine adenylyltransferase from Proteus mirabilis (strain HI4320).